The sequence spans 567 residues: Protein ESMERALDA 1 (567 aa).

Residues 1–41 (MLAKNRLPGSGHTTPSPPASPRRSPRYRHGRSKAAAGSRFP) are disordered. Topologically, residues 1–65 (MLAKNRLPGS…ILLSVLLRRQ (65 aa)) are cytoplasmic. Over residues 23–32 (RSPRYRHGRS) the composition is skewed to basic residues. A helical; Signal-anchor for type II membrane protein transmembrane segment spans residues 66-86 (GIFLFAPLIYISCMLLYMGTV). The Lumenal segment spans residues 87 to 567 (SFDVVPIIQR…TPESRPPPAT (481 aa)). Residues Asn-121, Asn-145, Asn-184, and Asn-238 are each glycosylated (N-linked (GlcNAc...) asparagine). 331–333 (HLR) is a binding site for substrate. Residues Asn-403, Asn-419, Asn-449, Asn-538, and Asn-554 are each glycosylated (N-linked (GlcNAc...) asparagine).

Belongs to the glycosyltransferase GT106 family. Ubiquitous.

It is found in the golgi apparatus membrane. It participates in protein modification; protein glycosylation. Functionally, glycosyltransferase that plays a role in cell adhesion. The polypeptide is Protein ESMERALDA 1 (Arabidopsis thaliana (Mouse-ear cress)).